The chain runs to 437 residues: tRNA-2-methylthio-N(6)-dimethylallyladenosine synthase (437 aa).

The MTTase N-terminal domain maps to 1-115 (MKVYIETMGC…ISQVIHKEKA (115 aa)). [4Fe-4S] cluster-binding residues include cysteine 10, cysteine 46, cysteine 78, cysteine 148, cysteine 152, and cysteine 155. The region spanning 134-367 (KKAQIRSLLN…QNRHKEILEE (234 aa)) is the Radical SAM core domain. The region spanning 370-436 (KLEVGKTHVV…KGRLMAATKG (67 aa)) is the TRAM domain.

It belongs to the methylthiotransferase family. MiaB subfamily. As to quaternary structure, monomer. It depends on [4Fe-4S] cluster as a cofactor.

Its subcellular location is the cytoplasm. It catalyses the reaction N(6)-dimethylallyladenosine(37) in tRNA + (sulfur carrier)-SH + AH2 + 2 S-adenosyl-L-methionine = 2-methylsulfanyl-N(6)-dimethylallyladenosine(37) in tRNA + (sulfur carrier)-H + 5'-deoxyadenosine + L-methionine + A + S-adenosyl-L-homocysteine + 2 H(+). Its function is as follows. Catalyzes the methylthiolation of N6-(dimethylallyl)adenosine (i(6)A), leading to the formation of 2-methylthio-N6-(dimethylallyl)adenosine (ms(2)i(6)A) at position 37 in tRNAs that read codons beginning with uridine. This chain is tRNA-2-methylthio-N(6)-dimethylallyladenosine synthase, found in Helicobacter pylori (strain ATCC 700392 / 26695) (Campylobacter pylori).